A 159-amino-acid chain; its full sequence is ATP synthase subunit b 2 (159 aa).

The helical transmembrane segment at 1 to 21 (MDATFWAFIALVIFVAIVVYM) threads the bilayer.

The protein belongs to the ATPase B chain family. In terms of assembly, F-type ATPases have 2 components, F(1) - the catalytic core - and F(0) - the membrane proton channel. F(1) has five subunits: alpha(3), beta(3), gamma(1), delta(1), epsilon(1). F(0) has three main subunits: a(1), b(2) and c(10-14). The alpha and beta chains form an alternating ring which encloses part of the gamma chain. F(1) is attached to F(0) by a central stalk formed by the gamma and epsilon chains, while a peripheral stalk is formed by the delta and b chains.

Its subcellular location is the cell inner membrane. F(1)F(0) ATP synthase produces ATP from ADP in the presence of a proton or sodium gradient. F-type ATPases consist of two structural domains, F(1) containing the extramembraneous catalytic core and F(0) containing the membrane proton channel, linked together by a central stalk and a peripheral stalk. During catalysis, ATP synthesis in the catalytic domain of F(1) is coupled via a rotary mechanism of the central stalk subunits to proton translocation. In terms of biological role, component of the F(0) channel, it forms part of the peripheral stalk, linking F(1) to F(0). This Brucella abortus (strain S19) protein is ATP synthase subunit b 2.